The sequence spans 265 residues: Mlc titration factor A (265 aa).

The Zn(2+) site is built by His-111, His-148, His-152, and Glu-211.

The protein belongs to the MtfA family. As to quaternary structure, interacts with Mlc. Zn(2+) is required as a cofactor.

The protein resides in the cytoplasm. Involved in the modulation of the activity of the glucose-phosphotransferase system (glucose-PTS). Interacts with the transcriptional repressor Mlc, preventing its interaction with DNA and leading to the modulation of expression of genes regulated by Mlc, including ptsG, which encodes the PTS system glucose-specific EIICB component. In terms of biological role, shows zinc-dependent metallopeptidase activity. The polypeptide is Mlc titration factor A (Escherichia coli O9:H4 (strain HS)).